We begin with the raw amino-acid sequence, 285 residues long: RNA polymerase sigma factor RpoH (285 aa).

The tract at residues 53–122 (LILSHLRFVV…IHEYVLRNWR (70 aa)) is sigma-70 factor domain-2. The short motif at 77-80 (DLVQ) is the Interaction with polymerase core subunit RpoC element. Positions 229–280 (ALASLDERSQHIVRSRWLDDDKATLQDLAEMYGVSAERIRQLEKNAMKKLKM) are sigma-70 factor domain-4. A DNA-binding region (H-T-H motif) is located at residues 253–272 (LQDLAEMYGVSAERIRQLEK).

It belongs to the sigma-70 factor family. RpoH subfamily. As to quaternary structure, interacts with the RNA polymerase core enzyme.

The protein resides in the cytoplasm. In terms of biological role, sigma factors are initiation factors that promote the attachment of RNA polymerase to specific initiation sites and are then released. This sigma factor is involved in regulation of expression of heat shock genes. In Vibrio vulnificus (strain CMCP6), this protein is RNA polymerase sigma factor RpoH.